Here is a 1357-residue protein sequence, read N- to C-terminus: DNA-directed RNA polymerase subunit beta (1357 aa).

Belongs to the RNA polymerase beta chain family. In terms of assembly, the RNAP catalytic core consists of 2 alpha, 1 beta, 1 beta' and 1 omega subunit. When a sigma factor is associated with the core the holoenzyme is formed, which can initiate transcription.

It catalyses the reaction RNA(n) + a ribonucleoside 5'-triphosphate = RNA(n+1) + diphosphate. DNA-dependent RNA polymerase catalyzes the transcription of DNA into RNA using the four ribonucleoside triphosphates as substrates. The chain is DNA-directed RNA polymerase subunit beta from Ectopseudomonas mendocina (strain ymp) (Pseudomonas mendocina).